The following is a 383-amino-acid chain: MPRSSLGLRIPEGMHDLLPDELALQEQAETSALDLFKAWAYQKVATPTLEYGACIQPVEEEGDSFFKLFDRQGHVLVLRPELTTSIARMVSTRMRGTAFPLRLCYAADVFRYSKSHKQEFRQVGVELIGSASSAADAEVVALAIEALRKIGGMDFQINLGHMGIFTGIMAELGVPQEFQLHYQEKLARKDFVGIERLVKDYGFETRVQDVLLKLPHLHGKEDMLDQVLEWSRRPSLLEAVNALRQVYRYLKDFGVQDYVSLDLGILRGFSYYTGAVFEGYVPGVGFPVVEGGRYDALYGDFGEDAPATGFAINLKAIIEQMVCSNAERPEVLVYGSDVSKVIAEARKLRQTGKRVEMCLESLTQEQAMESAECKGIKEVVCAR.

It belongs to the class-II aminoacyl-tRNA synthetase family. HisZ subfamily. As to quaternary structure, heteromultimer composed of HisG and HisZ subunits.

The protein localises to the cytoplasm. Its pathway is amino-acid biosynthesis; L-histidine biosynthesis; L-histidine from 5-phospho-alpha-D-ribose 1-diphosphate: step 1/9. In terms of biological role, required for the first step of histidine biosynthesis. May allow the feedback regulation of ATP phosphoribosyltransferase activity by histidine. This is ATP phosphoribosyltransferase regulatory subunit from Desulfitobacterium hafniense (strain Y51).